The chain runs to 506 residues: MPGLGRRAQWLCWWWGLLCSCGPPPLRPPLPVAAAAAGGQLLGAGGSPVRAEQPPPQSSSSGFLYRRLKTHEKREMQKEILSVLGLPHRPRPLHGLQQPQSPVLPQQQQSQQTAREEPPPGRLKSAPLFMLDLYNSLSKDDEEDGVSEGEGLEPESHGRASSSQLKQPSPGAAHSLNRKSLLAPGPGGSASPLTSAQDSAFLNDADMVMSFVNLVEYDKEFSPRQRHHKEFKFNLSQIPEGEAVTAAEFRVYKDCVVGSFKNQTFLISIYQVLQEHQHRDSDLFLLDTRVVWASEEGWLEFDITATSNLWVVTPQHNMGLQLSVVTRDGLHINPRAAGLVGRDGPYDKQPFMVAFFKVSEVHVRTTRSASSRRRQQSRNRSTQSQDVSRGSSASDYNSSELKTACKKHELYVSFQDLGWQDWIIAPKGYAANYCDGECSFPLNAHMNATNHAIVQTLVHLMNPEYVPKPCCAPTKLNAISVLYFDDNSNVILKKYRNMVVRACGCH.

Residues 1 to 20 (MPGLGRRAQWLCWWWGLLCS) form the signal peptide. A propeptide spanning residues 21-367 (CGPPPLRPPL…VSEVHVRTTR (347 aa)) is cleaved from the precursor. 3 disordered regions span residues 44 to 64 (AGGSPVRAEQPPPQSSSSGFL), 87 to 125 (PHRPRPLHGLQQPQSPVLPQQQQSQQTAREEPPPGRLKS), and 139 to 195 (KDDE…PLTS). The span at 96 to 112 (LQQPQSPVLPQQQQSQQ) shows a compositional bias: low complexity. Acidic residues predominate over residues 140–153 (DDEEDGVSEGEGLE). Residues N234, N262, N379, N397, and N447 are each glycosylated (N-linked (GlcNAc...) asparagine). The interval 366-397 (TRSASSRRRQQSRNRSTQSQDVSRGSSASDYN) is disordered. The segment covering 386–397 (DVSRGSSASDYN) has biased composition (polar residues). 3 cysteine pairs are disulfide-bonded: C405/C471, C434/C503, and C438/C505.

This sequence belongs to the TGF-beta family. Interacts with SOSTDC1. Interacts (when glycosylated) with type I receptor ACVR1; the interaction may induce HAMP expression. Interacts with type II receptor ACVR2B. Interacts with Hemojuvelin/HJV. Interacts with ERFE; the interaction inhibits BMP-induced transcription of HAMP. Interacts with BMPR1A/ALK3. Forms heterodimers with BMP2 in vitro; the heterodimer then binds to its receptor BMPR1A /ALK3 and may induce HAMP expression.

Its subcellular location is the secreted. Growth factor of the TGF-beta superfamily that plays essential roles in many developmental processes including cartilage and bone formation. Also plays an important role in the regulation of HAMP/hepcidin expression and iron metabolism by acting as a ligand for hemojuvelin/HJV. Also acts to promote expression of HAMP, potentially via the interaction with its receptor BMPR1A/ALK3. Initiates the canonical BMP signaling cascade by associating with type I receptor ACVR1 and type II receptor ACVR2B. In turn, ACVR1 propagates signal by phosphorylating SMAD1/5/8 that travel to the nucleus and act as activators and repressors of transcription of target. Can also signal through non-canonical pathway such as TAZ-Hippo signaling cascade to modulate VEGF signaling by regulating VEGFR2 expression. The sequence is that of Bone morphogenetic protein 6 (Bmp6) from Rattus norvegicus (Rat).